The sequence spans 344 residues: Heat-inducible transcription repressor HrcA (344 aa).

The protein belongs to the HrcA family.

In terms of biological role, negative regulator of class I heat shock genes (grpE-dnaK-dnaJ and groELS operons). Prevents heat-shock induction of these operons. This is Heat-inducible transcription repressor HrcA from Streptococcus agalactiae serotype III (strain NEM316).